Here is a 526-residue protein sequence, read N- to C-terminus: Glucomannan 4-beta-mannosyltransferase 1 (526 aa).

The helical transmembrane segment at 31–51 threads the bilayer; sequence VIIPLLKLAVIVCSVMSIMLF. Residue Asp130 is part of the active site. Substrate is bound by residues Asp189 and Asp191. Asp283 is a catalytic residue. A run of 4 helical transmembrane segments spans residues 362 to 382, 399 to 419, 477 to 497, and 501 to 521; these read IVAHWVTFFFYCIVIPACVIV, ITILNAVSTPRSMHLLVLWIL, PLEIIVGMYMLHCATYDLLFG, and FFVYLLLQAGAFFTMGFGLVG.

Belongs to the glycosyltransferase 2 family. Plant cellulose synthase-like A subfamily.

It is found in the golgi apparatus membrane. The enzyme catalyses GDP-mannose + (glucomannan)n = GDP + (glucomannan)n+1.. Its function is as follows. Possesses 4-beta-mannosyltransferase activity on mannan using GDP-mannose. The beta-1,4-mannan product is the backbone for galactomannan synthesis by galactomannan galactosyltransferase. The galactomannan is a hemicellulosic storage polysaccharide accumulated in the form of secondary wall thickenings in the seed endosperm. The protein is Glucomannan 4-beta-mannosyltransferase 1 of Cyamopsis tetragonoloba (Guar).